The chain runs to 351 residues: Bifunctional UDP-glucose 4-epimerase and UDP-xylose 4-epimerase 3 (351 aa).

8-39 (NILVTGGAGFIGTHTVVQLLNQGFKVTIIDNL) contributes to the NAD(+) binding site. Residue serine 134 participates in substrate binding. Tyrosine 158 acts as the Proton acceptor in catalysis.

It belongs to the NAD(P)-dependent epimerase/dehydratase family. In terms of assembly, homodimer. Heterodimer. The cofactor is NAD(+). Ubiquitous.

It catalyses the reaction UDP-alpha-D-glucose = UDP-alpha-D-galactose. The catalysed reaction is UDP-beta-L-arabinopyranose = UDP-alpha-D-xylose. It participates in carbohydrate metabolism; galactose metabolism. Its pathway is nucleotide-sugar biosynthesis; UDP-L-arabinose biosynthesis; UDP-L-arabinose from UDP-alpha-D-xylose: step 1/1. It functions in the pathway cell wall biogenesis; cell wall polysaccharide biosynthesis. Strongly inhibited by UDP. Catalyzes the interconversion between UDP-glucose and UDP-galactose and the interconversion between UDP-arabinose and UDP-xylose. Cooperates with UGE2 in pollen development. May preferentially act in the UDP-galactose to UDP-glucose direction, therefore displaying a role in carbohydrate catabolism. The polypeptide is Bifunctional UDP-glucose 4-epimerase and UDP-xylose 4-epimerase 3 (UGE3) (Arabidopsis thaliana (Mouse-ear cress)).